A 299-amino-acid chain; its full sequence is tRNA-cytidine(32) 2-sulfurtransferase (299 aa).

Positions 56–61 match the PP-loop motif motif; the sequence is SGGKDS. C131, C134, and C222 together coordinate [4Fe-4S] cluster.

This sequence belongs to the TtcA family. As to quaternary structure, homodimer. The cofactor is Mg(2+). Requires [4Fe-4S] cluster as cofactor.

The protein localises to the cytoplasm. The enzyme catalyses cytidine(32) in tRNA + S-sulfanyl-L-cysteinyl-[cysteine desulfurase] + AH2 + ATP = 2-thiocytidine(32) in tRNA + L-cysteinyl-[cysteine desulfurase] + A + AMP + diphosphate + H(+). Its pathway is tRNA modification. Its function is as follows. Catalyzes the ATP-dependent 2-thiolation of cytidine in position 32 of tRNA, to form 2-thiocytidine (s(2)C32). The sulfur atoms are provided by the cysteine/cysteine desulfurase (IscS) system. The polypeptide is tRNA-cytidine(32) 2-sulfurtransferase (Xylella fastidiosa (strain M12)).